The sequence spans 411 residues: Putative glycosyltransferase SCO3672 (411 aa).

10 helical membrane passes run Ile7–Leu27, Pro45–Gly65, Val70–Leu90, Glu120–Phe140, Gly148–Glu168, Leu169–Leu189, Ile197–Leu217, Gly227–Leu247, Gly277–His297, and Val301–Leu321.

Belongs to the glycosyltransferase 4 family.

It is found in the cell membrane. This Streptomyces coelicolor (strain ATCC BAA-471 / A3(2) / M145) protein is Putative glycosyltransferase SCO3672.